A 343-amino-acid chain; its full sequence is Anthranilate phosphoribosyltransferase (343 aa).

5-phospho-alpha-D-ribose 1-diphosphate is bound by residues glycine 86, 89 to 90 (GD), threonine 94, 96 to 99 (NIST), 114 to 122 (KHGNRSASG), and serine 126. Glycine 86 contributes to the anthranilate binding site. Serine 98 is a binding site for Mg(2+). Position 117 (asparagine 117) interacts with anthranilate. Position 172 (arginine 172) interacts with anthranilate. 2 residues coordinate Mg(2+): aspartate 231 and glutamate 232.

The protein belongs to the anthranilate phosphoribosyltransferase family. Homodimer. It depends on Mg(2+) as a cofactor.

The catalysed reaction is N-(5-phospho-beta-D-ribosyl)anthranilate + diphosphate = 5-phospho-alpha-D-ribose 1-diphosphate + anthranilate. The protein operates within amino-acid biosynthesis; L-tryptophan biosynthesis; L-tryptophan from chorismate: step 2/5. Catalyzes the transfer of the phosphoribosyl group of 5-phosphorylribose-1-pyrophosphate (PRPP) to anthranilate to yield N-(5'-phosphoribosyl)-anthranilate (PRA). The sequence is that of Anthranilate phosphoribosyltransferase from Synechococcus sp. (strain JA-3-3Ab) (Cyanobacteria bacterium Yellowstone A-Prime).